The primary structure comprises 104 residues: Large ribosomal subunit protein uL23 (104 aa).

Belongs to the universal ribosomal protein uL23 family. In terms of assembly, part of the 50S ribosomal subunit. Contacts protein L29, and trigger factor when it is bound to the ribosome.

Its function is as follows. One of the early assembly proteins it binds 23S rRNA. One of the proteins that surrounds the polypeptide exit tunnel on the outside of the ribosome. Forms the main docking site for trigger factor binding to the ribosome. This is Large ribosomal subunit protein uL23 from Leptospira interrogans serogroup Icterohaemorrhagiae serovar copenhageni (strain Fiocruz L1-130).